The following is a 120-amino-acid chain: NADH-quinone oxidoreductase subunit A (120 aa).

The next 3 membrane-spanning stretches (helical) occupy residues 6–26 (YGIIAVFLVGGAATAVAALAT), 63–83 (FLYALVFLLFDVETVFLYPWA), and 89–109 (LGLFAFAEMIVFIGILVLGLW).

Belongs to the complex I subunit 3 family. As to quaternary structure, NDH-1 is composed of 14 different subunits. Subunits NuoA, H, J, K, L, M, N constitute the membrane sector of the complex.

The protein localises to the cell membrane. It catalyses the reaction a quinone + NADH + 5 H(+)(in) = a quinol + NAD(+) + 4 H(+)(out). In terms of biological role, NDH-1 shuttles electrons from NADH, via FMN and iron-sulfur (Fe-S) centers, to quinones in the respiratory chain. The immediate electron acceptor for the enzyme in this species is believed to be a menaquinone. Couples the redox reaction to proton translocation (for every two electrons transferred, four hydrogen ions are translocated across the cytoplasmic membrane), and thus conserves the redox energy in a proton gradient. The polypeptide is NADH-quinone oxidoreductase subunit A (Moorella thermoacetica (strain ATCC 39073 / JCM 9320)).